A 172-amino-acid chain; its full sequence is Translocator protein 2 (172 aa).

Helical transmembrane passes span 3–23 (PQGAIFVALPHLGPILVSLLT), 45–65 (VLLAGWITIYFVMGYASYLVW), 80–100 (LGLYAVQLAVSWAVLIFFFAA), 104–124 (GLALLHMLLLYGLVVSTALIW), and 130–150 (LAAVLLLPYLAWLTVTASIAY).

The protein belongs to the TspO/BZRP family. As to quaternary structure, homotetramer. May also form homodimer. In terms of tissue distribution, expressed in erythrocytes (at protein level).

The protein localises to the endoplasmic reticulum membrane. It is found in the cell membrane. Functionally, cholesterol-binding protein involved in the redistribution of cholesterol from lipid droplets to the endoplasmic reticulum. Required to meet cholesterol demands during erythropoietic differentiation. May play a role in transport processes at the plasma membrane of erythrocytes, including regulating VDAC-mediated ATP export, and import of the heme precursors protoporphyrin IX and 5-aminolevulinic acid. This chain is Translocator protein 2, found in Canis lupus familiaris (Dog).